A 110-amino-acid chain; its full sequence is Cytochrome c6 (110 aa).

The first 25 residues, 1–25 (MKKLVSSVILALILFGFSWVSPAFA), serve as a signal peptide directing secretion. Heme c-binding residues include cysteine 39, cysteine 42, histidine 43, and methionine 83.

It belongs to the cytochrome c family. PetJ subfamily. Monomer. In terms of processing, binds 1 heme c group covalently per subunit.

It is found in the cellular thylakoid lumen. Functionally, functions as an electron carrier between membrane-bound cytochrome b6-f and photosystem I in oxygenic photosynthesis. The sequence is that of Cytochrome c6 from Gloeothece citriformis (strain PCC 7424) (Cyanothece sp. (strain PCC 7424)).